The primary structure comprises 350 residues: tRNA N6-adenosine threonylcarbamoyltransferase (350 aa).

Fe cation contacts are provided by His115 and His119. Substrate-binding positions include 137-141 (IISGG), Asp170, Gly183, and Asn281. Fe cation is bound at residue Asp309.

It belongs to the KAE1 / TsaD family. Fe(2+) serves as cofactor.

It is found in the cytoplasm. It carries out the reaction L-threonylcarbamoyladenylate + adenosine(37) in tRNA = N(6)-L-threonylcarbamoyladenosine(37) in tRNA + AMP + H(+). In terms of biological role, required for the formation of a threonylcarbamoyl group on adenosine at position 37 (t(6)A37) in tRNAs that read codons beginning with adenine. Is involved in the transfer of the threonylcarbamoyl moiety of threonylcarbamoyl-AMP (TC-AMP) to the N6 group of A37, together with TsaE and TsaB. TsaD likely plays a direct catalytic role in this reaction. The chain is tRNA N6-adenosine threonylcarbamoyltransferase from Ehrlichia canis (strain Jake).